Reading from the N-terminus, the 289-residue chain is 4-diphosphocytidyl-2-C-methyl-D-erythritol kinase (289 aa).

Lys10 is an active-site residue. 94–104 (PVAAGLAGGSS) is an ATP binding site. Asp136 is a catalytic residue.

This sequence belongs to the GHMP kinase family. IspE subfamily.

The enzyme catalyses 4-CDP-2-C-methyl-D-erythritol + ATP = 4-CDP-2-C-methyl-D-erythritol 2-phosphate + ADP + H(+). The protein operates within isoprenoid biosynthesis; isopentenyl diphosphate biosynthesis via DXP pathway; isopentenyl diphosphate from 1-deoxy-D-xylulose 5-phosphate: step 3/6. Its function is as follows. Catalyzes the phosphorylation of the position 2 hydroxy group of 4-diphosphocytidyl-2C-methyl-D-erythritol. This Bacillus velezensis (strain DSM 23117 / BGSC 10A6 / LMG 26770 / FZB42) (Bacillus amyloliquefaciens subsp. plantarum) protein is 4-diphosphocytidyl-2-C-methyl-D-erythritol kinase.